We begin with the raw amino-acid sequence, 639 residues long: ATP-dependent zinc metalloprotease FtsH (639 aa).

The Cytoplasmic segment spans residues 1 to 20; it reads MNGNNNMNNNGKSNNKKKNK. Residues 21–41 form a helical membrane-spanning segment; that stretch reads NWILGLVVVFLISAIFMSYFI. Residues 42-120 are Periplasmic-facing; it reads RGGESYKNVP…LSSGKSQASL (79 aa). The chain crosses the membrane as a helical span at residues 121-141; it reads IGVLLQTLPWILFFIFFFFIF. Residues 142-639 are Cytoplasmic-facing; the sequence is RQTQGGGGKV…KEVKGEDVKG (498 aa). Residue 212 to 219 participates in ATP binding; the sequence is GSPGTGKT. Position 434 (histidine 434) interacts with Zn(2+). Glutamate 435 is a catalytic residue. Positions 438 and 510 each coordinate Zn(2+).

This sequence in the central section; belongs to the AAA ATPase family. The protein in the C-terminal section; belongs to the peptidase M41 family. As to quaternary structure, homohexamer. Zn(2+) serves as cofactor.

The protein resides in the cell inner membrane. Functionally, acts as a processive, ATP-dependent zinc metallopeptidase for both cytoplasmic and membrane proteins. Plays a role in the quality control of integral membrane proteins. The polypeptide is ATP-dependent zinc metalloprotease FtsH (Borreliella burgdorferi (strain ZS7) (Borrelia burgdorferi)).